The sequence spans 61 residues: uncharacterized protein (61 aa).

This is an uncharacterized protein from Acidianus convivator (ABV).